Consider the following 417-residue polypeptide: UDP-N-acetylglucosamine 1-carboxyvinyltransferase (417 aa).

22–23 (KN) is a binding site for phosphoenolpyruvate. Arginine 93 is a UDP-N-acetyl-alpha-D-glucosamine binding site. Cysteine 117 serves as the catalytic Proton donor. Cysteine 117 carries the post-translational modification 2-(S-cysteinyl)pyruvic acid O-phosphothioketal. Residues 122 to 126 (RPVDQ), aspartate 305, and isoleucine 327 each bind UDP-N-acetyl-alpha-D-glucosamine.

The protein belongs to the EPSP synthase family. MurA subfamily.

It is found in the cytoplasm. The enzyme catalyses phosphoenolpyruvate + UDP-N-acetyl-alpha-D-glucosamine = UDP-N-acetyl-3-O-(1-carboxyvinyl)-alpha-D-glucosamine + phosphate. It participates in cell wall biogenesis; peptidoglycan biosynthesis. In terms of biological role, cell wall formation. Adds enolpyruvyl to UDP-N-acetylglucosamine. This Dechloromonas aromatica (strain RCB) protein is UDP-N-acetylglucosamine 1-carboxyvinyltransferase.